The following is a 105-amino-acid chain: Small ribosomal subunit protein eS24 (105 aa).

A disordered region spans residues 85-105 (SVIAKNEEPEEEPEEEAEDAE). Positions 92–105 (EPEEEPEEEAEDAE) are enriched in acidic residues.

It belongs to the eukaryotic ribosomal protein eS24 family.

In Methanosphaera stadtmanae (strain ATCC 43021 / DSM 3091 / JCM 11832 / MCB-3), this protein is Small ribosomal subunit protein eS24.